A 414-amino-acid chain; its full sequence is NAC domain-containing protein 35 (414 aa).

The segment covering 1 to 21 has biased composition (polar residues); sequence MAIVSSTTSIIPMSNQVNNNE. Positions 1–47 are disordered; the sequence is MAIVSSTTSIIPMSNQVNNNEKGIEDNDHRGGQESHVQNEDEADDHD. The segment covering 22-47 has biased composition (basic and acidic residues); sequence KGIEDNDHRGGQESHVQNEDEADDHD. The region spanning 51–198 is the NAC domain; that stretch reads VMPGFRFHPT…EISLCRVYKR (148 aa). Residues 149-204 mediate DNA binding; sequence IGLKKTLVFYSGKAPKGTRTSWIMNEYRLPHHETEKYQKAEISLCRVYKRPGVEDH. Positions 200–251 are disordered; it reads GVEDHPSVPRSLSTRHHNHNSSTSSRLALRQQQHHSSSSNHSDNNLNNNNNI. A compositionally biased stretch (low complexity) spans 233-251; that stretch reads HHSSSSNHSDNNLNNNNNI.

Expressed in aerial organs in early stages of seedling development.

It is found in the nucleus. In terms of biological role, transcription factor that acts as a floral repressor. Controls flowering time by negatively regulating CONSTANS (CO) expression in a GIGANTEA (GI)-independent manner. Regulates the plant cold response by positive regulation of the cold response genes COR15A and KIN1. May coordinate cold response and flowering time. The sequence is that of NAC domain-containing protein 35 from Arabidopsis thaliana (Mouse-ear cress).